A 208-amino-acid polypeptide reads, in one-letter code: Ribosomal RNA small subunit methyltransferase J (208 aa).

S-adenosyl-L-methionine is bound by residues 54-55 (RD), 70-71 (ER), and D122.

The protein belongs to the methyltransferase superfamily. RsmJ family.

It localises to the cytoplasm. The catalysed reaction is guanosine(1516) in 16S rRNA + S-adenosyl-L-methionine = N(2)-methylguanosine(1516) in 16S rRNA + S-adenosyl-L-homocysteine + H(+). Functionally, specifically methylates the guanosine in position 1516 of 16S rRNA. In Agrobacterium fabrum (strain C58 / ATCC 33970) (Agrobacterium tumefaciens (strain C58)), this protein is Ribosomal RNA small subunit methyltransferase J.